The following is a 257-amino-acid chain: Acetylglutamate kinase (257 aa).

Substrate-binding positions include 43–44 (GG), arginine 65, and asparagine 157. ATP-binding positions include 180 to 185 (DVSGIL) and 208 to 210 (IIT).

It belongs to the acetylglutamate kinase family. ArgB subfamily. As to quaternary structure, homodimer.

The protein localises to the cytoplasm. It catalyses the reaction N-acetyl-L-glutamate + ATP = N-acetyl-L-glutamyl 5-phosphate + ADP. It participates in amino-acid biosynthesis; L-arginine biosynthesis; N(2)-acetyl-L-ornithine from L-glutamate: step 2/4. Its function is as follows. Catalyzes the ATP-dependent phosphorylation of N-acetyl-L-glutamate. This Salmonella paratyphi A (strain AKU_12601) protein is Acetylglutamate kinase.